Here is a 229-residue protein sequence, read N- to C-terminus: Potassium/proton antiporter CemA (229 aa).

Helical transmembrane passes span 7–27, 114–134, 154–174, and 189–209; these read FTPL…SLSF, ITCF…LVIL, ILLL…ELMI, and IISG…KYWI.

This sequence belongs to the CemA family.

The protein localises to the plastid. It is found in the chloroplast inner membrane. It catalyses the reaction K(+)(in) + H(+)(out) = K(+)(out) + H(+)(in). Its function is as follows. Contributes to K(+)/H(+) antiport activity by supporting proton efflux to control proton extrusion and homeostasis in chloroplasts in a light-dependent manner to modulate photosynthesis. Prevents excessive induction of non-photochemical quenching (NPQ) under continuous-light conditions. Indirectly promotes efficient inorganic carbon uptake into chloroplasts. This is Potassium/proton antiporter CemA from Platanus occidentalis (Sycamore).